The primary structure comprises 494 residues: Glutamate--tRNA ligase (494 aa).

The 'HIGH' region signature appears at 9-19; the sequence is PSPTGDPHLGT. The 'KMSKS' region signature appears at 250–254; sequence KLSKR. Lys253 contributes to the ATP binding site.

The protein belongs to the class-I aminoacyl-tRNA synthetase family. Glutamate--tRNA ligase type 1 subfamily. In terms of assembly, monomer.

Its subcellular location is the cytoplasm. The catalysed reaction is tRNA(Glu) + L-glutamate + ATP = L-glutamyl-tRNA(Glu) + AMP + diphosphate. Functionally, catalyzes the attachment of glutamate to tRNA(Glu) in a two-step reaction: glutamate is first activated by ATP to form Glu-AMP and then transferred to the acceptor end of tRNA(Glu). The polypeptide is Glutamate--tRNA ligase (Pseudoalteromonas translucida (strain TAC 125)).